We begin with the raw amino-acid sequence, 114 residues long: UPF0342 protein lp_1415 (114 aa).

This sequence belongs to the UPF0342 family.

The chain is UPF0342 protein lp_1415 from Lactiplantibacillus plantarum (strain ATCC BAA-793 / NCIMB 8826 / WCFS1) (Lactobacillus plantarum).